A 338-amino-acid chain; its full sequence is MQFIDQAEIEVQAGKGGDGIVAFRREKYVPAGGPSGGNGGRGGSVILVAVEHLQTLLDFRYSRHFKAEDGKRGGPNNCTGANGSDRIIEVPRGTMIYDADTEEIIGDLVDNEQRLCIAQGGKGGLGNQHFLSNKNRAPEYALPGLEGEHRRIRLELKLLAEVGIIGLPNAGKSTLISALSSARPKIADYPFTTLIPNLGVVRKPTGDGTVFADIPGLIEGAHEGVGLGYDFLRHIERTRLLLHLVDLTAEDPIKDYQIIQQELEAYGRGLIDRPQIIGLNKLDAVDETVVTQIENDLSQITSDPIFKISAVARIGLDQMLQATWEQLDSNPSEVNISH.

Residues methionine 1–leucine 159 form the Obg domain. In terms of domain architecture, OBG-type G spans alanine 160–aspartate 328. Residues glycine 166 to serine 173, phenylalanine 191 to isoleucine 195, aspartate 213 to glycine 216, asparagine 280 to aspartate 283, and serine 309 to valine 311 each bind GTP. Residues serine 173 and threonine 193 each contribute to the Mg(2+) site.

The protein belongs to the TRAFAC class OBG-HflX-like GTPase superfamily. OBG GTPase family. In terms of assembly, monomer. The cofactor is Mg(2+).

The protein localises to the cytoplasm. An essential GTPase which binds GTP, GDP and possibly (p)ppGpp with moderate affinity, with high nucleotide exchange rates and a fairly low GTP hydrolysis rate. Plays a role in control of the cell cycle, stress response, ribosome biogenesis and in those bacteria that undergo differentiation, in morphogenesis control. The polypeptide is GTPase Obg (Gloeothece citriformis (strain PCC 7424) (Cyanothece sp. (strain PCC 7424))).